Consider the following 226-residue polypeptide: tRNA (guanine-N(1)-)-methyltransferase (226 aa).

S-adenosyl-L-methionine-binding positions include G110 and I130–L135.

It belongs to the RNA methyltransferase TrmD family. In terms of assembly, homodimer.

Its subcellular location is the cytoplasm. It carries out the reaction guanosine(37) in tRNA + S-adenosyl-L-methionine = N(1)-methylguanosine(37) in tRNA + S-adenosyl-L-homocysteine + H(+). Functionally, specifically methylates guanosine-37 in various tRNAs. The chain is tRNA (guanine-N(1)-)-methyltransferase from Nitratiruptor sp. (strain SB155-2).